We begin with the raw amino-acid sequence, 378 residues long: Carbamoyl phosphate synthase small chain (378 aa).

The segment at 1–188 is CPSase; sequence MLPSFPPAIL…LGRGYGVQDK (188 aa). 3 residues coordinate L-glutamine: S50, G240, and G242. Residues 192–378 form the Glutamine amidotransferase type-1 domain; it reads HVVAYDFGVK…FTAAMAERKQ (187 aa). C268 serves as the catalytic Nucleophile. Residues L269, Q272, N310, G312, and F313 each coordinate L-glutamine. Catalysis depends on residues H352 and E354.

It belongs to the CarA family. Composed of two chains; the small (or glutamine) chain promotes the hydrolysis of glutamine to ammonia, which is used by the large (or ammonia) chain to synthesize carbamoyl phosphate. Tetramer of heterodimers (alpha,beta)4.

The enzyme catalyses hydrogencarbonate + L-glutamine + 2 ATP + H2O = carbamoyl phosphate + L-glutamate + 2 ADP + phosphate + 2 H(+). The catalysed reaction is L-glutamine + H2O = L-glutamate + NH4(+). Its pathway is amino-acid biosynthesis; L-arginine biosynthesis; carbamoyl phosphate from bicarbonate: step 1/1. The protein operates within pyrimidine metabolism; UMP biosynthesis via de novo pathway; (S)-dihydroorotate from bicarbonate: step 1/3. Small subunit of the glutamine-dependent carbamoyl phosphate synthetase (CPSase). CPSase catalyzes the formation of carbamoyl phosphate from the ammonia moiety of glutamine, carbonate, and phosphate donated by ATP, constituting the first step of 2 biosynthetic pathways, one leading to arginine and/or urea and the other to pyrimidine nucleotides. The small subunit (glutamine amidotransferase) binds and cleaves glutamine to supply the large subunit with the substrate ammonia. In Ralstonia nicotianae (strain ATCC BAA-1114 / GMI1000) (Ralstonia solanacearum), this protein is Carbamoyl phosphate synthase small chain.